We begin with the raw amino-acid sequence, 210 residues long: Ribosomal RNA small subunit methyltransferase G (210 aa).

S-adenosyl-L-methionine is bound by residues glycine 80, leucine 85, 131–132 (VE), and arginine 146.

This sequence belongs to the methyltransferase superfamily. RNA methyltransferase RsmG family.

The protein resides in the cytoplasm. The enzyme catalyses guanosine(527) in 16S rRNA + S-adenosyl-L-methionine = N(7)-methylguanosine(527) in 16S rRNA + S-adenosyl-L-homocysteine. In terms of biological role, specifically methylates the N7 position of guanine in position 527 of 16S rRNA. In Pasteurella multocida (strain Pm70), this protein is Ribosomal RNA small subunit methyltransferase G.